Here is a 197-residue protein sequence, read N- to C-terminus: Guanylyl cyclase-activating protein 2 (197 aa).

Gly2 carries the N-myristoyl glycine lipid modification. EF-hand domains are found at residues 15-50 (DVAE…QDNQ), 51-86 (EAAD…VLRG), 87-122 (KLEH…IYNL), and 138-173 (SPEQ…DKWV). Ca(2+) contacts are provided by Asp64, Asn66, Asp68, Thr70, Glu75, Asp100, Asp102, Asn104, Cys106, Glu111, Asp151, Asn153, Asp155, Gln157, and Glu162.

As to expression, low expression in retina.

Functionally, stimulates guanylyl cyclase 1 (GC1) and GC2 when free calcium ions concentration is low and inhibits guanylyl cyclases when free calcium ions concentration is elevated. This Ca(2+)-sensitive regulation of guanylyl cyclase (GC) is a key event in recovery of the dark state of rod photoreceptors following light exposure. In Lithobates pipiens (Northern leopard frog), this protein is Guanylyl cyclase-activating protein 2 (GUCA1B).